The primary structure comprises 399 residues: Phosphoglycerate kinase (399 aa).

Residues 22–24 (DFN), Arg38, 61–64 (HLGR), Arg120, and Arg153 each bind substrate. ATP contacts are provided by residues Lys204, Glu326, and 352 to 355 (GGDT).

The protein belongs to the phosphoglycerate kinase family. Monomer.

It localises to the cytoplasm. The enzyme catalyses (2R)-3-phosphoglycerate + ATP = (2R)-3-phospho-glyceroyl phosphate + ADP. It functions in the pathway carbohydrate degradation; glycolysis; pyruvate from D-glyceraldehyde 3-phosphate: step 2/5. This is Phosphoglycerate kinase from Citrifermentans bemidjiense (strain ATCC BAA-1014 / DSM 16622 / JCM 12645 / Bem) (Geobacter bemidjiensis).